The chain runs to 826 residues: Ubiquitin carboxyl-terminal hydrolase 16 (826 aa).

The disordered stretch occupies residues 1–23; that stretch reads MGKKRTKGKSVPEKASSESTEPM. The UBP-type zinc finger occupies 22–141; it reads PMCRHLRKGL…QVVDYVRKQA (120 aa). Zn(2+) is bound by residues Cys24, His26, Cys48, Cys51, Cys73, Cys76, Cys81, His89, His93, His102, Cys115, and Cys118. Residue Lys139 forms a Glycyl lysine isopeptide (Lys-Gly) (interchain with G-Cter in SUMO2) linkage. Positions 145-184 are disordered; that stretch reads TSKPAEKNNGHIELENKKLEKESKNEQEREKSESMAKENI. Over residues 148-180 the composition is skewed to basic and acidic residues; the sequence is PAEKNNGHIELENKKLEKESKNEQEREKSESMA. Residue Ser188 is modified to Phosphoserine. Residues 195 to 825 enclose the USP domain; sequence KGLSNLGNTC…QAYLLFYERI (631 aa). Cys204 functions as the Nucleophile in the catalytic mechanism. Basic and acidic residues predominate over residues 392 to 407; the sequence is QSGKKNINDKNVKKTM. Disordered stretches follow at residues 392–456 and 526–553; these read QSGK…RRQQ and ADERKCPEHPEVKSVSTESDLGSLTSAP. The span at 408-419 shows a compositional bias: acidic residues; sequence EEEDKDSEEEKD. Ser414 bears the Phosphoserine mark. The segment covering 436 to 456 has biased composition (basic residues); the sequence is HTQKKAKKQAKKQAKNQRRQQ. Residues 526-537 show a composition bias toward basic and acidic residues; the sequence is ADERKCPEHPEV. Positions 539 to 551 are enriched in polar residues; the sequence is SVSTESDLGSLTS. The active-site Proton acceptor is the His760.

The protein belongs to the peptidase C19 family. USP16 subfamily. As to quaternary structure, homotetramer. Associates with late pre-40S ribosomes. Interacts with CEP78; promoting deubiquitination of tektins. In terms of processing, phosphorylated at the onset of mitosis and dephosphorylated during the metaphase/anaphase transition. Phosphorylation by AURKB enhances the deubiquitinase activity.

The protein resides in the nucleus. The catalysed reaction is Thiol-dependent hydrolysis of ester, thioester, amide, peptide and isopeptide bonds formed by the C-terminal Gly of ubiquitin (a 76-residue protein attached to proteins as an intracellular targeting signal).. Specifically deubiquitinates 'Lys-120' of histone H2A (H2AK119Ub), a specific tag for epigenetic transcriptional repression, thereby acting as a coactivator. Deubiquitination of histone H2A is a prerequisite for subsequent phosphorylation at 'Ser-11' of histone H3 (H3S10ph), and is required for chromosome segregation when cells enter into mitosis. In resting B- and T-lymphocytes, phosphorylation by AURKB leads to enhance its activity, thereby maintaining transcription in resting lymphocytes. Regulates Hox gene expression via histone H2A deubiquitination. Prefers nucleosomal substrates. Does not deubiquitinate histone H2B. Also deubiquitinates non-histone proteins, such as ribosomal protein RPS27A: deubiquitination of monoubiquitinated RPS27A promotes maturation of the 40S ribosomal subunit. Also mediates deubiquitination of tektin proteins (TEKT1, TEKT2, TEK3, TEKT4 and TEKT5), promoting their stability. In Rattus norvegicus (Rat), this protein is Ubiquitin carboxyl-terminal hydrolase 16 (Usp16).